The following is a 123-amino-acid chain: Holo-[acyl-carrier-protein] synthase (123 aa).

The Mg(2+) site is built by D8 and E56.

The protein belongs to the P-Pant transferase superfamily. AcpS family. Requires Mg(2+) as cofactor.

It is found in the cytoplasm. The catalysed reaction is apo-[ACP] + CoA = holo-[ACP] + adenosine 3',5'-bisphosphate + H(+). Its function is as follows. Transfers the 4'-phosphopantetheine moiety from coenzyme A to a Ser of acyl-carrier-protein. The protein is Holo-[acyl-carrier-protein] synthase of Treponema denticola (strain ATCC 35405 / DSM 14222 / CIP 103919 / JCM 8153 / KCTC 15104).